Reading from the N-terminus, the 175-residue chain is NADH-ubiquinone oxidoreductase chain 6 (175 aa).

Transmembrane regions (helical) follow at residues 1–21, 25–45, 47–67, 88–108, and 149–169; these read MMLY…VGFS, SPIY…GIVL, FGGS…MMVV, AVLG…YYVL, and YGTW…VVIM.

This sequence belongs to the complex I subunit 6 family. As to quaternary structure, core subunit of respiratory chain NADH dehydrogenase (Complex I) which is composed of 45 different subunits.

The protein localises to the mitochondrion inner membrane. It catalyses the reaction a ubiquinone + NADH + 5 H(+)(in) = a ubiquinol + NAD(+) + 4 H(+)(out). Its function is as follows. Core subunit of the mitochondrial membrane respiratory chain NADH dehydrogenase (Complex I) which catalyzes electron transfer from NADH through the respiratory chain, using ubiquinone as an electron acceptor. Essential for the catalytic activity and assembly of complex I. The polypeptide is NADH-ubiquinone oxidoreductase chain 6 (MT-ND6) (Bos indicus (Zebu)).